The chain runs to 448 residues: Putative F-box/LRR-repeat protein At3g44810 (448 aa).

Residues 6 to 54 (TASLNCLPDELLVHVLSSLETKQAASTSVLSKRWRTLFAVRRNLDFDDS) enclose the F-box domain. 6 LRR repeats span residues 117-141 (VSEL…VFRS), 143-165 (TLVK…TCLP), 190-213 (CPAL…VSSK), 228-251 (FDWF…TYAR), 290-313 (VRNV…CKGG), and 421-443 (IVDS…SSRL).

This is Putative F-box/LRR-repeat protein At3g44810 from Arabidopsis thaliana (Mouse-ear cress).